The chain runs to 323 residues: Beta-ketoacyl-[acyl-carrier-protein] synthase III (323 aa).

Catalysis depends on residues Cys113 and His250. The ACP-binding stretch occupies residues 251-255; that stretch reads QANLR. Asn280 is an active-site residue.

This sequence belongs to the thiolase-like superfamily. FabH family. In terms of assembly, homodimer.

The protein localises to the cytoplasm. It carries out the reaction malonyl-[ACP] + acetyl-CoA + H(+) = 3-oxobutanoyl-[ACP] + CO2 + CoA. It functions in the pathway lipid metabolism; fatty acid biosynthesis. Its function is as follows. Catalyzes the condensation reaction of fatty acid synthesis by the addition to an acyl acceptor of two carbons from malonyl-ACP. Catalyzes the first condensation reaction which initiates fatty acid synthesis and may therefore play a role in governing the total rate of fatty acid production. Possesses both acetoacetyl-ACP synthase and acetyl transacylase activities. Its substrate specificity determines the biosynthesis of branched-chain and/or straight-chain of fatty acids. The protein is Beta-ketoacyl-[acyl-carrier-protein] synthase III of Paracoccus denitrificans (strain Pd 1222).